A 202-amino-acid chain; its full sequence is Small ribosomal subunit protein uS4 (202 aa).

Residues 23–42 (RKNARRAYAPGQHGQARKKR) are disordered. The region spanning 90 to 153 (MRLDNTVFRL…RSQDLVKRNM (64 aa)) is the S4 RNA-binding domain.

This sequence belongs to the universal ribosomal protein uS4 family. As to quaternary structure, part of the 30S ribosomal subunit. Contacts protein S5. The interaction surface between S4 and S5 is involved in control of translational fidelity.

Functionally, one of the primary rRNA binding proteins, it binds directly to 16S rRNA where it nucleates assembly of the body of the 30S subunit. In terms of biological role, with S5 and S12 plays an important role in translational accuracy. The polypeptide is Small ribosomal subunit protein uS4 (Microcystis aeruginosa (strain NIES-843 / IAM M-2473)).